A 106-amino-acid polypeptide reads, in one-letter code: Ribonuclease P protein component 4 (106 aa).

Residues Cys62, Cys65, Cys88, and Cys91 each coordinate Zn(2+).

The protein belongs to the eukaryotic/archaeal RNase P protein component 4 family. Consists of a catalytic RNA component and at least 4-5 protein subunits. Zn(2+) serves as cofactor.

It localises to the cytoplasm. The catalysed reaction is Endonucleolytic cleavage of RNA, removing 5'-extranucleotides from tRNA precursor.. In terms of biological role, part of ribonuclease P, a protein complex that generates mature tRNA molecules by cleaving their 5'-ends. This Methanocorpusculum labreanum (strain ATCC 43576 / DSM 4855 / Z) protein is Ribonuclease P protein component 4.